A 626-amino-acid chain; its full sequence is Glutamine--fructose-6-phosphate aminotransferase [isomerizing] (626 aa).

The active-site Nucleophile; for GATase activity is the cysteine 2. Residues 2–222 (CGIVGYIGPQ…NGELARLTPT (221 aa)) form the Glutamine amidotransferase type-2 domain. 2 SIS domains span residues 293–441 (LPPS…QRQS) and 471–616 (YIEA…VDQP). The For Fru-6P isomerization activity role is filled by lysine 621.

Homodimer.

Its subcellular location is the cytoplasm. The enzyme catalyses D-fructose 6-phosphate + L-glutamine = D-glucosamine 6-phosphate + L-glutamate. Functionally, catalyzes the first step in hexosamine metabolism, converting fructose-6P into glucosamine-6P using glutamine as a nitrogen source. In Thermosynechococcus vestitus (strain NIES-2133 / IAM M-273 / BP-1), this protein is Glutamine--fructose-6-phosphate aminotransferase [isomerizing].